The primary structure comprises 199 residues: Probable GTP-binding protein EngB (199 aa).

The 175-residue stretch at I21–G195 folds into the EngB-type G domain. GTP-binding positions include G29–S36, G56–L60, D81–G84, T151–D154, and V174–N176. Mg(2+) is bound by residues S36 and T58.

The protein belongs to the TRAFAC class TrmE-Era-EngA-EngB-Septin-like GTPase superfamily. EngB GTPase family. Mg(2+) is required as a cofactor.

Its function is as follows. Necessary for normal cell division and for the maintenance of normal septation. This is Probable GTP-binding protein EngB from Campylobacter lari (strain RM2100 / D67 / ATCC BAA-1060).